The chain runs to 392 residues: Copper-containing nitrite reductase (392 aa).

Residues 1-18 form the signal peptide; sequence MKRQALAAMIASLFALAA. Residue C19 is the site of N-palmitoyl cysteine attachment. A lipid anchor (S-diacylglycerol cysteine) is attached at C19. The segment at 30-49 is disordered; that stretch reads ETPAASAEAASSAAQATAET. 2 consecutive Plastocyanin-like domains span residues 101–195 and 245–346; these read WTFD…ILVE and GHVG…LKVE. Residues H134, H139, H174, C175, H183, and M188 each coordinate Cu cation. Substrate is bound at residue H139. H280 is a binding site for substrate. H329 serves as a coordination point for Cu cation. The interval 367–392 is disordered; the sequence is GAASAPAASAPAASAPAASASEKSVY. A run of 4 repeats spans residues 368–372, 373–377, 378–382, and 383–387. The tract at residues 368–387 is 4 X 5 AA tandem repeats of A-A-S-A-P; the sequence is AASAPAASAPAASAPAASAS.

This sequence belongs to the multicopper oxidase family. As to quaternary structure, homotrimer. Requires Cu(+) as cofactor. The cofactor is Cu(2+). Post-translationally, palmitoylated.

The protein localises to the cell outer membrane. The catalysed reaction is nitric oxide + Fe(III)-[cytochrome c] + H2O = Fe(II)-[cytochrome c] + nitrite + 2 H(+). Functionally, catalyzes the reduction of nitrite to nitric oxide (NO), probably with azurin as electron donor. Essential for growth and survival in oxygen-depleted environments. Can also provide protection against killing by normal human sera. This chain is Copper-containing nitrite reductase (aniA), found in Neisseria gonorrhoeae.